The following is a 1157-amino-acid chain: ATP-dependent helicase/deoxyribonuclease subunit B (1157 aa).

In terms of domain architecture, UvrD-like helicase ATP-binding spans 1 to 278 (MTLQIIAGRS…FFLENKRAKT (278 aa)). 8–15 (GRSGTGKT) provides a ligand contact to ATP. In terms of domain architecture, UvrD-like helicase C-terminal spans 272–590 (ENKRAKTESL…VLSDMENAKL (319 aa)). Residues Cys-794, Cys-1115, Cys-1118, and Cys-1124 each coordinate [4Fe-4S] cluster.

The protein belongs to the helicase family. AddB/RexB type 1 subfamily. Heterodimer of AddA and AddB. It depends on Mg(2+) as a cofactor. [4Fe-4S] cluster serves as cofactor.

Its function is as follows. The heterodimer acts as both an ATP-dependent DNA helicase and an ATP-dependent, dual-direction single-stranded exonuclease. Recognizes the chi site generating a DNA molecule suitable for the initiation of homologous recombination. The AddB subunit has 5' -&gt; 3' nuclease activity but not helicase activity. The protein is ATP-dependent helicase/deoxyribonuclease subunit B of Listeria monocytogenes serotype 4a (strain HCC23).